The sequence spans 120 residues: Large ribosomal subunit protein uL14 (120 aa).

This sequence belongs to the universal ribosomal protein uL14 family. In terms of assembly, part of the 50S ribosomal subunit. Forms a cluster with proteins L3 and L19. In the 70S ribosome, L14 and L19 interact and together make contacts with the 16S rRNA in bridges B5 and B8.

Binds to 23S rRNA. Forms part of two intersubunit bridges in the 70S ribosome. This is Large ribosomal subunit protein uL14 from Dictyoglomus thermophilum (strain ATCC 35947 / DSM 3960 / H-6-12).